The following is a 229-amino-acid chain: 2-C-methyl-D-erythritol 4-phosphate cytidylyltransferase (229 aa).

This sequence belongs to the IspD/TarI cytidylyltransferase family. IspD subfamily.

It carries out the reaction 2-C-methyl-D-erythritol 4-phosphate + CTP + H(+) = 4-CDP-2-C-methyl-D-erythritol + diphosphate. It functions in the pathway isoprenoid biosynthesis; isopentenyl diphosphate biosynthesis via DXP pathway; isopentenyl diphosphate from 1-deoxy-D-xylulose 5-phosphate: step 2/6. Catalyzes the formation of 4-diphosphocytidyl-2-C-methyl-D-erythritol from CTP and 2-C-methyl-D-erythritol 4-phosphate (MEP). This is 2-C-methyl-D-erythritol 4-phosphate cytidylyltransferase from Clostridium botulinum (strain Loch Maree / Type A3).